A 401-amino-acid chain; its full sequence is uncharacterized protein (401 aa).

The next 10 membrane-spanning stretches (helical) occupy residues 20–40 (FFGE…MVLY), 49–69 (IMMP…LTLA), 83–100 (ILTA…FVFA), 104–121 (YVFA…SLYI), 140–160 (VFAV…LVGM), 167–187 (PVWI…IAAL), 207–227 (FTIY…SMLY), 248–268 (MLTI…VPLV), 289–309 (LAAA…TAAV), and 357–377 (GLIL…VCLL).

Belongs to the major facilitator superfamily.

The protein localises to the cell membrane. This is an uncharacterized protein from Bacillus subtilis (strain 168).